The following is a 314-amino-acid chain: Oxaloacetate tautomerase FAHD2B, mitochondrial (314 aa).

The transit peptide at 1 to 84 (MLVSGRRRLL…ATLSVARRAL (84 aa)) directs the protein to the mitochondrion. Mg(2+) is bound by residues glutamate 159, glutamate 161, and aspartate 190.

The protein belongs to the FAH family. Mg(2+) is required as a cofactor. The cofactor is Mn(2+).

Its subcellular location is the mitochondrion. It catalyses the reaction oxaloacetate = enol-oxaloacetate. In terms of biological role, tautomerase that converts enol-oxaloacetate, a strong inhibitor of succinate dehydrogenase, to the physiological keto form of oxaloacetate. It is thereby required to maximize aerobic respiration efficiency by preventing succinate dehydrogenase inhibition. The chain is Oxaloacetate tautomerase FAHD2B, mitochondrial from Homo sapiens (Human).